The following is a 122-amino-acid chain: NADPH-dependent 7-cyano-7-deazaguanine reductase (122 aa).

Cysteine 34 functions as the Thioimide intermediate in the catalytic mechanism. The Proton donor role is filled by aspartate 41. Substrate contacts are provided by residues 56 to 58 and 75 to 76; these read VEL and HE.

Belongs to the GTP cyclohydrolase I family. QueF type 1 subfamily.

The protein localises to the cytoplasm. The catalysed reaction is 7-aminomethyl-7-carbaguanine + 2 NADP(+) = 7-cyano-7-deazaguanine + 2 NADPH + 3 H(+). The protein operates within tRNA modification; tRNA-queuosine biosynthesis. Catalyzes the NADPH-dependent reduction of 7-cyano-7-deazaguanine (preQ0) to 7-aminomethyl-7-deazaguanine (preQ1). The chain is NADPH-dependent 7-cyano-7-deazaguanine reductase from Anaeromyxobacter dehalogenans (strain 2CP-C).